The sequence spans 501 residues: MAATSEGPLFAASIEKTWGSVVRSPEGTPQKVRELIDEGIVPEEGGTEPKDTAATFQSVDGSPQAEQSPLESTSKEAFFHRVETFSSLKWAGKPPELSPLICAKYGWVTVECDMLKCSSCQAFLCASLQPTFDFGRYKERCAELKKSLCSAHEKFCFWPDSPSPDRFGMLPLGEPAVLISEFLDRFQSLCHLDLQLPSLRPEDLKTMCLTEDAVSALLHLLEDELDFHADDRKTTSKLGSDVQVQATACVLSLCGWACSSLEPTQLSLITCYQCMRKVGLWGFQQIESSMTDLEASFGLTSSPIPGVEGRPEHFPLVPESPRRMMTRSQDATVSPGSEQSEKSPGPIVSRTRSWESSSPVDRPELEAASPTTRSRPVTRSMGTGDSAGVEVPSSPLRRTKRARLCSSSSSDTSPRSFFDPTSQHRDWCPWVNITLVKETKENGETEVDACTPAEPGWKAVLTILLAHKRSNQPAETDSMSLSEKSRKVFRIFRQWESSSSS.

Residue Ala2 is modified to N-acetylalanine. The tract at residues Val21–Thr73 is disordered. Ser24 carries the post-translational modification Phosphoserine. Residue Thr28 is modified to Phosphothreonine. A compositionally biased stretch (polar residues) spans Ala54–Ser72. Ser58, Ser62, and Ser68 each carry phosphoserine. Thr84 carries the phosphothreonine modification. Residues Cys102–Cys156 form a C3HC-type zinc finger. A disordered region spans residues Ser302 to Thr421. Residues Ser320 and Ser328 each carry the phosphoserine modification. Over residues Thr326 to Glu338 the composition is skewed to polar residues. Thr332 carries the post-translational modification Phosphothreonine. 7 positions are modified to phosphoserine: Ser334, Ser337, Ser343, Ser353, Ser358, Ser369, and Ser380. Polar residues-rich tracts occupy residues Arg350–Pro359 and Ser369–Thr383. Thr383 carries the phosphothreonine modification. Ser394 is modified (phosphoserine). The Nuclear localization signal motif lies at Pro395 to Arg401. Phosphoserine is present on residues Ser406 and Ser482. Low complexity predominate over residues Ser406 to Pro420.

In terms of assembly, interacts with TPR; this interaction mediates ZC3HC1 nuclear envelopes (NE)-association but also required for proper positioning of a substantial amount of TPR at the nuclear basket (NB). Phosphorylated. May also be weakly phosphorylated on Tyr residues.

The protein resides in the nucleus. It is found in the nucleus envelope. Functionally, required for proper positioning of a substantial amount of TPR at the nuclear basket (NB) through interaction with TPR. The protein is Zinc finger C3HC-type protein 1 (Zc3hc1) of Mus musculus (Mouse).